The following is a 717-amino-acid chain: Inhibitor of nuclear factor kappa-B kinase subunit epsilon (717 aa).

A Protein kinase domain is found at 9–315 (WHTDDLLGQG…LQRTVIHVFS (307 aa)). 15–23 (LGQGATASV) contributes to the ATP binding site. Lys-30 is covalently cross-linked (Glycyl lysine isopeptide (Lys-Gly) (interchain with G-Cter in ubiquitin)). Lys-38 lines the ATP pocket. Asp-135 functions as the Proton acceptor in the catalytic mechanism. At Ser-172 the chain carries Phosphoserine; by autocatalysis and IKKB. A Glycyl lysine isopeptide (Lys-Gly) (interchain with G-Cter in SUMO1) cross-link involves residue Lys-231. The interaction with DDX3X stretch occupies residues 385–650 (SSDTPKGLAF…AQESLNKIFD (266 aa)). Residue Lys-403 forms a Glycyl lysine isopeptide (Lys-Gly) (interchain with G-Cter in ubiquitin) linkage. The leucine-zipper stretch occupies residues 452-473 (LQDTCQQTLEVTRTALLYLSSS). Position 503 is a phosphothreonine (Thr-503). Ser-665 is modified (phosphoserine).

This sequence belongs to the protein kinase superfamily. Ser/Thr protein kinase family. I-kappa-B kinase subfamily. Homodimer. Interacts with MAVS/IPS1. Interacts (via protein kinase domain) with TTLL12 (via N-terminus); the interaction prevents MAVS binding to IKBKE. Interacts with the adapter proteins AZI2/NAP1, TANK and TBKBP1/SINTBAD. Interacts with SIKE1. Interacts with TICAM1/TRIF, IRF3 and RIGI; interactions are disrupted by the interaction between IKBKE and SIKE1. Interacts with TOPORS; induced by DNA damage. Interacts with CYLD, IKBKB, IKBKG and MYD88. Interacts with IFIH1. Interacts with DDX3X; the interaction may be induced upon virus infection. Interacts with TRIM6 (via SPRY box). Interacts with unanchored K48-linked polyubiquitin chains; this leads to IKBKE activation. Interacts with TBK1. Interacts with FKBP5. Sumoylation by TOPORS upon DNA damage is required for protection of cells against DNA damage-induced cell death. Desumoylated by SENP1. In terms of processing, autophosphorylated and phosphorylated by IKBKB/IKKB. Phosphorylation at Ser-172 is enhanced by the interaction with DDX3X. Phosphorylated at Thr-503 upon IFN activation. Post-translationally, 'Lys-63'-linked polyubiquitinated at Lys-30 and Lys-403 by TRAF2:BIRC2 and TRAF2:BIRC3 complexes. Ubiquitination is induced by LPS, TNFA and interleukin-1 and required for full kinase activity and KF-kappa-B pathway activation. As to expression, expressed in bone marrow-derived macrophages and at low levels in liver and white adipose tissue (at protein level). Detected in muscle and lung.

The protein localises to the cytoplasm. It is found in the nucleus. It localises to the PML body. The enzyme catalyses L-seryl-[I-kappa-B protein] + ATP = O-phospho-L-seryl-[I-kappa-B protein] + ADP + H(+). Kinase activity is inhibited competitively by amlexanox. Functionally, serine/threonine kinase that plays an essential role in regulating inflammatory responses to viral infection, through the activation of the type I IFN, NF-kappa-B and STAT signaling. Also involved in TNFA and inflammatory cytokines, like Interleukin-1, signaling. Following activation of viral RNA sensors, such as RIG-I-like receptors, associates with DDX3X and phosphorylates interferon regulatory factors (IRFs), IRF3 and IRF7, as well as DDX3X. This activity allows subsequent homodimerization and nuclear translocation of the IRF3 leading to transcriptional activation of pro-inflammatory and antiviral genes including IFNB. In order to establish such an antiviral state, IKBKE forms several different complexes whose composition depends on the type of cell and cellular stimuli. Thus, several scaffolding molecules including IPS1/MAVS, TANK, AZI2/NAP1 or TBKBP1/SINTBAD can be recruited to the IKBKE-containing-complexes. Activated by polyubiquitination in response to TNFA and interleukin-1, regulates the NF-kappa-B signaling pathway through, at least, the phosphorylation of CYLD. Phosphorylates inhibitors of NF-kappa-B thus leading to the dissociation of the inhibitor/NF-kappa-B complex and ultimately the degradation of the inhibitor. In addition, is also required for the induction of a subset of ISGs which displays antiviral activity, may be through the phosphorylation of STAT1 at 'Ser-708'. Phosphorylation of STAT1 at 'Ser-708' also seems to promote the assembly and DNA binding of ISGF3 (STAT1:STAT2:IRF9) complexes compared to GAF (STAT1:STAT1) complexes, in this way regulating the balance between type I and type II IFN responses. Protects cells against DNA damage-induced cell death. Also plays an important role in energy balance regulation by sustaining a state of chronic, low-grade inflammation in obesity, wich leads to a negative impact on insulin sensitivity. Phosphorylates AKT1. The polypeptide is Inhibitor of nuclear factor kappa-B kinase subunit epsilon (Ikbke) (Mus musculus (Mouse)).